A 379-amino-acid polypeptide reads, in one-letter code: Type II methyltransferase M.SsoII (379 aa).

The HTH cro/C1-type domain occupies 9-66 (IKEKRERLHMTQKEFADALGLSKYGDRTIRRWERGETKPTGAELKAVIDFPDTPPYPN). In terms of domain architecture, SAM-dependent MTase C5-type spans 72–379 (YRMIDLFAGI…AEKIISTLDS (308 aa)). Cysteine 142 is a catalytic residue.

It belongs to the class I-like SAM-binding methyltransferase superfamily. C5-methyltransferase family.

The catalysed reaction is a 2'-deoxycytidine in DNA + S-adenosyl-L-methionine = a 5-methyl-2'-deoxycytidine in DNA + S-adenosyl-L-homocysteine + H(+). Its function is as follows. A methylase that recognizes the double-stranded sequence 5'-CCNGG-3', methylates C-2 on both strands, and protects the DNA from cleavage by the SsoII endonuclease. In Shigella sonnei, this protein is Type II methyltransferase M.SsoII (ssoIIM).